The primary structure comprises 201 residues: Ribonuclease HII (201 aa).

One can recognise an RNase H type-2 domain in the interval 12–201 (DLVAGVDEVG…VRELLDVSVQ (190 aa)). Residues D18, E19, and D110 each coordinate a divalent metal cation.

Belongs to the RNase HII family. It depends on Mn(2+) as a cofactor. Mg(2+) is required as a cofactor.

It localises to the cytoplasm. It carries out the reaction Endonucleolytic cleavage to 5'-phosphomonoester.. In terms of biological role, endonuclease that specifically degrades the RNA of RNA-DNA hybrids. This chain is Ribonuclease HII, found in Pseudomonas aeruginosa (strain LESB58).